We begin with the raw amino-acid sequence, 377 residues long: Molybdenum import ATP-binding protein ModC (377 aa).

One can recognise an ABC transporter domain in the interval 4-240; that stretch reads IAPRSIRGEF…PALPLATARD (237 aa). 38–45 contacts ATP; that stretch reads GPSGCGKS. The region spanning 299-369 is the Mop domain; the sequence is RTSILNILPA…IKGVALAPER (71 aa).

Belongs to the ABC transporter superfamily. Molybdate importer (TC 3.A.1.8) family. As to quaternary structure, the complex is composed of two ATP-binding proteins (ModC), two transmembrane proteins (ModB) and a solute-binding protein (ModA).

It localises to the cell inner membrane. It carries out the reaction molybdate(out) + ATP + H2O = molybdate(in) + ADP + phosphate + H(+). Part of the ABC transporter complex ModABC involved in molybdenum import. Responsible for energy coupling to the transport system. This Rhodopseudomonas palustris (strain HaA2) protein is Molybdenum import ATP-binding protein ModC.